The following is a 466-amino-acid chain: D-inositol 3-phosphate glycosyltransferase (466 aa).

Positions methionine 1–glycine 12 are enriched in low complexity. The segment at methionine 1–proline 22 is disordered. Histidine 43 contacts 1D-myo-inositol 3-phosphate. UDP-N-acetyl-alpha-D-glucosamine is bound by residues glutamine 49–proline 50 and glycine 57. Residues aspartate 54 to asparagine 59, lysine 112, tyrosine 145, threonine 169, and arginine 189 contribute to the 1D-myo-inositol 3-phosphate site. Positions 263, 268, and 321 each coordinate UDP-N-acetyl-alpha-D-glucosamine. Mg(2+)-binding residues include phenylalanine 330, histidine 331, and valine 333. UDP-N-acetyl-alpha-D-glucosamine is bound by residues glutamate 343 and glutamate 351. Mg(2+) is bound at residue threonine 357. A disordered region spans residues valine 446–alanine 466.

It belongs to the glycosyltransferase group 1 family. MshA subfamily. Homodimer.

The catalysed reaction is 1D-myo-inositol 3-phosphate + UDP-N-acetyl-alpha-D-glucosamine = 1D-myo-inositol 2-acetamido-2-deoxy-alpha-D-glucopyranoside 3-phosphate + UDP + H(+). Functionally, catalyzes the transfer of a N-acetyl-glucosamine moiety to 1D-myo-inositol 3-phosphate to produce 1D-myo-inositol 2-acetamido-2-deoxy-glucopyranoside 3-phosphate in the mycothiol biosynthesis pathway. This is D-inositol 3-phosphate glycosyltransferase from Mycobacterium marinum (strain ATCC BAA-535 / M).